A 206-amino-acid chain; its full sequence is Outer-membrane lipoprotein LolB (206 aa).

Positions M1–A18 are cleaved as a signal peptide. C19 is lipidated: N-palmitoyl cysteine. The S-diacylglycerol cysteine moiety is linked to residue C19.

This sequence belongs to the LolB family. Monomer.

Its subcellular location is the cell outer membrane. Functionally, plays a critical role in the incorporation of lipoproteins in the outer membrane after they are released by the LolA protein. The protein is Outer-membrane lipoprotein LolB of Haemophilus influenzae (strain PittEE).